The chain runs to 488 residues: Phenylalanine--tRNA ligase alpha subunit (488 aa).

Residues threonine 315, 354-356 (QLD), phenylalanine 394, and phenylalanine 419 each bind L-phenylalanine.

This sequence belongs to the class-II aminoacyl-tRNA synthetase family. Phe-tRNA synthetase alpha subunit type 2 subfamily. In terms of assembly, tetramer of two alpha and two beta subunits. Requires Mg(2+) as cofactor.

It is found in the cytoplasm. It carries out the reaction tRNA(Phe) + L-phenylalanine + ATP = L-phenylalanyl-tRNA(Phe) + AMP + diphosphate + H(+). This chain is Phenylalanine--tRNA ligase alpha subunit, found in Pyrobaculum arsenaticum (strain DSM 13514 / JCM 11321 / PZ6).